The sequence spans 1687 residues: Vitellogenin-2 (1687 aa).

The first 15 residues, 1–15 (MRVLVLALTVALVAG), serve as a signal peptide directing secretion. In terms of domain architecture, Vitellogenin spans 24–663 (FAPGKTYEYK…DAATVLPKNI (640 aa)). N-linked (GlcNAc...) asparagine glycans are attached at residues Asn-941, Asn-945, Asn-954, Asn-1004, Asn-1019, and Asn-1083. The tract at residues 1081–1174 (LKNSTKASSS…SSSSSKTKWQ (94 aa)) is disordered. Low complexity predominate over residues 1088 to 1127 (SSSSSGSSRSSRSRSSSSSSSSSSSSSSRSSSSSSRSSSS). Asn-1142 carries N-linked (GlcNAc...) asparagine glycosylation. Positions 1148-1169 (SSSSSSSSSSSSSSSSSSSSSS) are enriched in low complexity. Residues Asn-1179, Asn-1257, Asn-1292, Asn-1342, Asn-1361, Asn-1366, and Asn-1390 are each glycosylated (N-linked (GlcNAc...) asparagine). Residues 1417–1593 (AECTVVEDTV…SWVLPAKSCR (177 aa)) enclose the VWFD domain. 2 cysteine pairs are disulfide-bonded: Cys-1419–Cys-1556 and Cys-1442–Cys-1592. Asn-1577 and Asn-1655 each carry an N-linked (GlcNAc...) asparagine glycan.

In terms of processing, phosvitin, an egg yolk storage protein, is one of the most highly phosphorylated (10%) proteins in nature. As to expression, produced by the liver, secreted into the blood and then sequestered by receptor mediated endocytosis into growing oocytes, where it is generally cleaved, giving rise to the respective yolk components lipovitellins and phosvitin.

Its function is as follows. Precursor of the egg-yolk proteins that are sources of nutrients during early development of oviparous organisms. This chain is Vitellogenin-2, found in Fundulus heteroclitus (Killifish).